We begin with the raw amino-acid sequence, 283 residues long: Phosphatidylserine decarboxylase proenzyme (283 aa).

Active-site charge relay system; for autoendoproteolytic cleavage activity residues include Asp90, His143, and Ser248. The active-site Schiff-base intermediate with substrate; via pyruvic acid; for decarboxylase activity is the Ser248. Ser248 carries the post-translational modification Pyruvic acid (Ser); by autocatalysis.

The protein belongs to the phosphatidylserine decarboxylase family. PSD-B subfamily. Prokaryotic type I sub-subfamily. Heterodimer of a large membrane-associated beta subunit and a small pyruvoyl-containing alpha subunit. Pyruvate serves as cofactor. Is synthesized initially as an inactive proenzyme. Formation of the active enzyme involves a self-maturation process in which the active site pyruvoyl group is generated from an internal serine residue via an autocatalytic post-translational modification. Two non-identical subunits are generated from the proenzyme in this reaction, and the pyruvate is formed at the N-terminus of the alpha chain, which is derived from the carboxyl end of the proenzyme. The autoendoproteolytic cleavage occurs by a canonical serine protease mechanism, in which the side chain hydroxyl group of the serine supplies its oxygen atom to form the C-terminus of the beta chain, while the remainder of the serine residue undergoes an oxidative deamination to produce ammonia and the pyruvoyl prosthetic group on the alpha chain. During this reaction, the Ser that is part of the protease active site of the proenzyme becomes the pyruvoyl prosthetic group, which constitutes an essential element of the active site of the mature decarboxylase.

Its subcellular location is the cell membrane. The catalysed reaction is a 1,2-diacyl-sn-glycero-3-phospho-L-serine + H(+) = a 1,2-diacyl-sn-glycero-3-phosphoethanolamine + CO2. It functions in the pathway phospholipid metabolism; phosphatidylethanolamine biosynthesis; phosphatidylethanolamine from CDP-diacylglycerol: step 2/2. Its function is as follows. Catalyzes the formation of phosphatidylethanolamine (PtdEtn) from phosphatidylserine (PtdSer). This chain is Phosphatidylserine decarboxylase proenzyme, found in Francisella tularensis subsp. holarctica (strain OSU18).